Here is a 208-residue protein sequence, read N- to C-terminus: MRLIRTLFVAALAMGASLAHADDSAAVQRLTGLLNKAQTLTARFSQLTLDGSGTRLQETAGQLSLKRPGLFRWHTDAPNEQLLISNGEKVWLYDPDLEQVTIQKLDQRLTQTPALLLSGDISKISESFAITYKEGGNVVDFVLKPKTKDTLFDTLRLSFRSGKVNDMQMIDGVGQRTNILFFDVKMNEALDAKQFTFDVPPGVDVIQE.

Positions 1-21 (MRLIRTLFVAALAMGASLAHA) are cleaved as a signal peptide.

It belongs to the LolA family. In terms of assembly, monomer.

Its subcellular location is the periplasm. Participates in the translocation of lipoproteins from the inner membrane to the outer membrane. Only forms a complex with a lipoprotein if the residue after the N-terminal Cys is not an aspartate (The Asp acts as a targeting signal to indicate that the lipoprotein should stay in the inner membrane). The protein is Outer-membrane lipoprotein carrier protein of Pseudomonas aeruginosa (strain UCBPP-PA14).